Here is a 342-residue protein sequence, read N- to C-terminus: MTNILSPEKSENDQELPIRPSYLQEFVGQQQIKENLLVFIKAAKSRNEHLDHTLFYGPPGLGKTTLAKIISNEIGGNFKSTAGPAIIKAADLAAILTNLEKNDVLFIDEIHRLNTLVEEILYSAMEDFELDIIIGEGSAARSVKITLPKFTLIGATTRFGMLSNSLRDRFGIPMRLNFYNTEELKQVLNRASKLLDIDLTDSGSEEIAKRSRGTPRIALRLLRRIRDFAVVDGKLRIDKEICDFGLKRLTVDSIGLDSNDYRYLKFIADNYHGGPVGIETIAAALSEQRDELEETIEPYLIKIGLVKRTPRGRVITIAAFEHLKMPIPNKSQHQFNILNENE.

Residues 1–179 (MTNILSPEKS…FGIPMRLNFY (179 aa)) form a large ATPase domain (RuvB-L) region. ATP is bound by residues Ile18, Arg19, Gly60, Lys63, Thr64, Thr65, 126 to 128 (EDF), Arg169, Tyr179, and Arg216. Thr64 is a Mg(2+) binding site. The small ATPAse domain (RuvB-S) stretch occupies residues 180–250 (NTEELKQVLN…ICDFGLKRLT (71 aa)). The interval 253–342 (SIGLDSNDYR…HQFNILNENE (90 aa)) is head domain (RuvB-H). Residues Arg289, Arg308, and Arg313 each coordinate DNA.

It belongs to the RuvB family. In terms of assembly, homohexamer. Forms an RuvA(8)-RuvB(12)-Holliday junction (HJ) complex. HJ DNA is sandwiched between 2 RuvA tetramers; dsDNA enters through RuvA and exits via RuvB. An RuvB hexamer assembles on each DNA strand where it exits the tetramer. Each RuvB hexamer is contacted by two RuvA subunits (via domain III) on 2 adjacent RuvB subunits; this complex drives branch migration. In the full resolvosome a probable DNA-RuvA(4)-RuvB(12)-RuvC(2) complex forms which resolves the HJ.

The protein resides in the cytoplasm. It carries out the reaction ATP + H2O = ADP + phosphate + H(+). Its function is as follows. The RuvA-RuvB-RuvC complex processes Holliday junction (HJ) DNA during genetic recombination and DNA repair, while the RuvA-RuvB complex plays an important role in the rescue of blocked DNA replication forks via replication fork reversal (RFR). RuvA specifically binds to HJ cruciform DNA, conferring on it an open structure. The RuvB hexamer acts as an ATP-dependent pump, pulling dsDNA into and through the RuvAB complex. RuvB forms 2 homohexamers on either side of HJ DNA bound by 1 or 2 RuvA tetramers; 4 subunits per hexamer contact DNA at a time. Coordinated motions by a converter formed by DNA-disengaged RuvB subunits stimulates ATP hydrolysis and nucleotide exchange. Immobilization of the converter enables RuvB to convert the ATP-contained energy into a lever motion, pulling 2 nucleotides of DNA out of the RuvA tetramer per ATP hydrolyzed, thus driving DNA branch migration. The RuvB motors rotate together with the DNA substrate, which together with the progressing nucleotide cycle form the mechanistic basis for DNA recombination by continuous HJ branch migration. Branch migration allows RuvC to scan DNA until it finds its consensus sequence, where it cleaves and resolves cruciform DNA. The chain is Holliday junction branch migration complex subunit RuvB from Rickettsia typhi (strain ATCC VR-144 / Wilmington).